A 362-amino-acid chain; its full sequence is Alkanal monooxygenase alpha chain (362 aa).

Belongs to the bacterial luciferase oxidoreductase family. As to quaternary structure, heterodimer of an alpha and a beta chain.

It carries out the reaction a long-chain fatty aldehyde + FMNH2 + O2 = a long-chain fatty acid + hnu + FMN + H2O + 2 H(+). Its function is as follows. Light-emitting reaction in luminous bacteria. The polypeptide is Alkanal monooxygenase alpha chain (luxA) (Photorhabdus luminescens (Xenorhabdus luminescens)).